The following is an 83-amino-acid chain: Neurotoxin LmNaTx10 (83 aa).

An N-terminal signal peptide occupies residues 1–19 (MNFLIFIAVASSLALGALC). Positions 21-80 (KEGYPYDGNNCRYICFRNQYCDDLCKKLKGESGYCYGWNQSCYCYGLPDTEKTKPDKRCH) constitute an LCN-type CS-alpha/beta domain. 4 disulfide bridges follow: cysteine 31–cysteine 79, cysteine 35–cysteine 55, cysteine 41–cysteine 62, and cysteine 45–cysteine 64.

This sequence belongs to the long (4 C-C) scorpion toxin superfamily. Sodium channel inhibitor family. Alpha subfamily. In terms of tissue distribution, expressed by the venom gland.

It localises to the secreted. Functionally, binds voltage-independently at site-3 of voltage-gated sodium channels (Nav) and inhibits the inactivation of the activated channels, thereby blocking neuronal transmission. The sequence is that of Neurotoxin LmNaTx10 from Lychas mucronatus (Chinese swimming scorpion).